Consider the following 257-residue polypeptide: NAD-capped RNA hydrolase NudC (257 aa).

A substrate-binding site is contributed by Arg-69. 2 residues coordinate Zn(2+): Cys-98 and Cys-101. Residue Glu-111 participates in substrate binding. Residues Cys-116 and Cys-119 each contribute to the Zn(2+) site. Residue Tyr-124 coordinates substrate. A Nudix hydrolase domain is found at 125–248; it reads PQIAPCIIVA…TVARRLIEDT (124 aa). Positions 158, 174, and 178 each coordinate a divalent metal cation. Positions 159-180 match the Nudix box motif; that stretch reads GFVEVGETLEQAVAREVMEESG. A substrate-binding site is contributed by 192 to 199; that stretch reads QPWPFPQS. Residue Glu-219 participates in a divalent metal cation binding. Position 241 (Ala-241) interacts with substrate.

Belongs to the Nudix hydrolase family. NudC subfamily. Homodimer. The cofactor is Mg(2+). Requires Mn(2+) as cofactor. Zn(2+) is required as a cofactor.

The catalysed reaction is a 5'-end NAD(+)-phospho-ribonucleoside in mRNA + H2O = a 5'-end phospho-adenosine-phospho-ribonucleoside in mRNA + beta-nicotinamide D-ribonucleotide + 2 H(+). It carries out the reaction NAD(+) + H2O = beta-nicotinamide D-ribonucleotide + AMP + 2 H(+). It catalyses the reaction NADH + H2O = reduced beta-nicotinamide D-ribonucleotide + AMP + 2 H(+). In terms of biological role, mRNA decapping enzyme that specifically removes the nicotinamide adenine dinucleotide (NAD) cap from a subset of mRNAs by hydrolyzing the diphosphate linkage to produce nicotinamide mononucleotide (NMN) and 5' monophosphate mRNA. The NAD-cap is present at the 5'-end of some mRNAs and stabilizes RNA against 5'-processing. Has preference for mRNAs with a 5'-end purine. Catalyzes the hydrolysis of a broad range of dinucleotide pyrophosphates. The protein is NAD-capped RNA hydrolase NudC of Klebsiella pneumoniae subsp. pneumoniae (strain ATCC 700721 / MGH 78578).